The sequence spans 858 residues: Elongation factor 2 (858 aa).

The tr-type G domain maps to 17–362; the sequence is ANIRNMSVIA…MITIHLPSPV (346 aa). Residues 26-33, 158-161, and 216-218 each bind GTP; these read AHVDHGKS, NKMD, and SGL. Histidine 715 carries the post-translational modification Diphthamide.

The protein belongs to the TRAFAC class translation factor GTPase superfamily. Classic translation factor GTPase family. EF-G/EF-2 subfamily. In terms of assembly, binds to 80S ribosomes. Actively translating ribosomes show mutually exclusive binding of eIF5a (EIF5A or EIF5A2) and EEF2/eEF2. Interacts with serbp1; interaction sequesters eef2/eEF2 at the A-site of the ribosome, thereby blocking the interaction sites of the mRNA-tRNA complex, promoting ribosome stabilization and hibernation. Interacts with habp4; interaction takes place at the A-site of hibernating ribosomes and promotes ribosome stabilization.

The protein localises to the cytoplasm. It is found in the nucleus. It carries out the reaction GTP + H2O = GDP + phosphate + H(+). In terms of biological role, catalyzes the GTP-dependent ribosomal translocation step during translation elongation. During this step, the ribosome changes from the pre-translocational (PRE) to the post-translocational (POST) state as the newly formed A-site-bound peptidyl-tRNA and P-site-bound deacylated tRNA move to the P and E sites, respectively. Catalyzes the coordinated movement of the two tRNA molecules, the mRNA and conformational changes in the ribosome. This chain is Elongation factor 2, found in Xenopus laevis (African clawed frog).